A 286-amino-acid polypeptide reads, in one-letter code: Bifunctional protein FolD (286 aa).

NADP(+) is bound by residues 166 to 168 (GAS) and Ile232.

It belongs to the tetrahydrofolate dehydrogenase/cyclohydrolase family. Homodimer.

It catalyses the reaction (6R)-5,10-methylene-5,6,7,8-tetrahydrofolate + NADP(+) = (6R)-5,10-methenyltetrahydrofolate + NADPH. It carries out the reaction (6R)-5,10-methenyltetrahydrofolate + H2O = (6R)-10-formyltetrahydrofolate + H(+). The protein operates within one-carbon metabolism; tetrahydrofolate interconversion. Catalyzes the oxidation of 5,10-methylenetetrahydrofolate to 5,10-methenyltetrahydrofolate and then the hydrolysis of 5,10-methenyltetrahydrofolate to 10-formyltetrahydrofolate. This is Bifunctional protein FolD from Shewanella woodyi (strain ATCC 51908 / MS32).